The chain runs to 140 residues: Cytochrome c-type biogenesis protein CcmE (140 aa).

Over 1 to 7 the chain is Cytoplasmic; the sequence is MTKRQNR. The chain crosses the membrane as a helical; Signal-anchor for type II membrane protein span at residues 8 to 28; that stretch reads MVLVALLVIGVSLAGYLGLKA. Residues 29 to 140 are Periplasmic-facing; the sequence is FNENLLYFLS…DALEKAKNKQ (112 aa). Heme is bound by residues histidine 120 and tyrosine 124.

This sequence belongs to the CcmE/CycJ family.

The protein localises to the cell inner membrane. Functionally, heme chaperone required for the biogenesis of c-type cytochromes. Transiently binds heme delivered by CcmC and transfers the heme to apo-cytochromes in a process facilitated by CcmF and CcmH. The chain is Cytochrome c-type biogenesis protein CcmE from Vesicomyosocius okutanii subsp. Calyptogena okutanii (strain HA).